A 602-amino-acid polypeptide reads, in one-letter code: Glutaminase liver isoform, mitochondrial (602 aa).

Residues Met-1–Ala-14 constitute a mitochondrion transit peptide. 2 disordered regions span residues Met-1–Arg-28 and Gln-46–Gly-67. Ser-219 contacts substrate. An N6-succinyllysine modification is found at Lys-253. A substrate-binding site is contributed by Asn-268. N6-acetyllysine occurs at positions 279 and 284. Residues Glu-314 and Asn-321 each contribute to the substrate site. The residue at position 329 (Lys-329) is an N6-acetyllysine. Tyr-347, Tyr-399, and Val-417 together coordinate substrate. ANK repeat units follow at residues Asp-518 to Arg-551 and Trp-552 to Gln-585.

The protein belongs to the glutaminase family. Homotetramer, dimer of dimers. Does not assemble into higher oligomers. Interacts with the PDZ domain of the syntrophin SNTA1. Interacts with the PDZ domain of TAX1BP3. Liver specific.

It is found in the mitochondrion. It catalyses the reaction L-glutamine + H2O = L-glutamate + NH4(+). Functionally, plays an important role in the regulation of glutamine catabolism. Promotes mitochondrial respiration and increases ATP generation in cells by catalyzing the synthesis of glutamate and alpha-ketoglutarate. Increases cellular anti-oxidant function via NADH and glutathione production. May play a role in preventing tumor proliferation. This Rattus norvegicus (Rat) protein is Glutaminase liver isoform, mitochondrial (Gls2).